A 218-amino-acid polypeptide reads, in one-letter code: Glutathione S-transferase Mu 7 (218 aa).

One can recognise a GST N-terminal domain in the interval 1 to 88 (MPMTLGYWDI…YLGRKHNLCG (88 aa)). Residues 7-8 (YW), 46-50 (WLNEK), 59-60 (NL), and 72-73 (QS) contribute to the glutathione site. A GST C-terminal domain is found at 90–208 (TEEERIRVDI…KTSRFLPRPM (119 aa)). Tyr116 is a binding site for substrate.

Belongs to the GST superfamily. Mu family. Homodimer.

The protein localises to the cytoplasm. It carries out the reaction RX + glutathione = an S-substituted glutathione + a halide anion + H(+). Its function is as follows. Conjugation of reduced glutathione to a wide number of exogenous and endogenous hydrophobic electrophiles. In Mus musculus (Mouse), this protein is Glutathione S-transferase Mu 7 (Gstm7).